Here is a 282-residue protein sequence, read N- to C-terminus: Probable endonuclease 4 (282 aa).

The Zn(2+) site is built by H69, H109, E144, D178, H181, H215, D228, H230, and E260.

It belongs to the AP endonuclease 2 family. The cofactor is Zn(2+).

The catalysed reaction is Endonucleolytic cleavage to 5'-phosphooligonucleotide end-products.. Endonuclease IV plays a role in DNA repair. It cleaves phosphodiester bonds at apurinic or apyrimidinic (AP) sites, generating a 3'-hydroxyl group and a 5'-terminal sugar phosphate. This Thermosipho africanus (strain TCF52B) protein is Probable endonuclease 4.